Reading from the N-terminus, the 139-residue chain is Putative nickel-responsive regulator (139 aa).

Ni(2+)-binding residues include H79, H90, H92, and C98.

This sequence belongs to the transcriptional regulatory CopG/NikR family. Requires Ni(2+) as cofactor.

In terms of biological role, transcriptional regulator. This Geobacter sulfurreducens (strain ATCC 51573 / DSM 12127 / PCA) protein is Putative nickel-responsive regulator.